Reading from the N-terminus, the 179-residue chain is Large ribosomal subunit protein uL5 (179 aa).

This sequence belongs to the universal ribosomal protein uL5 family. As to quaternary structure, part of the 50S ribosomal subunit; part of the 5S rRNA/L5/L18/L25 subcomplex. Contacts the 5S rRNA and the P site tRNA. Forms a bridge to the 30S subunit in the 70S ribosome.

This is one of the proteins that bind and probably mediate the attachment of the 5S RNA into the large ribosomal subunit, where it forms part of the central protuberance. In the 70S ribosome it contacts protein S13 of the 30S subunit (bridge B1b), connecting the 2 subunits; this bridge is implicated in subunit movement. Contacts the P site tRNA; the 5S rRNA and some of its associated proteins might help stabilize positioning of ribosome-bound tRNAs. In Azotobacter vinelandii (strain DJ / ATCC BAA-1303), this protein is Large ribosomal subunit protein uL5.